Reading from the N-terminus, the 218-residue chain is 3,4-dihydroxy-2-butanone 4-phosphate synthase (218 aa).

D-ribulose 5-phosphate-binding positions include 38 to 39 (RE), aspartate 43, 151 to 155 (RRGHT), and glutamate 175. Glutamate 39 lines the Mg(2+) pocket. Histidine 154 is a binding site for Mg(2+).

It belongs to the DHBP synthase family. Homodimer. Mg(2+) serves as cofactor. Requires Mn(2+) as cofactor.

The enzyme catalyses D-ribulose 5-phosphate = (2S)-2-hydroxy-3-oxobutyl phosphate + formate + H(+). It functions in the pathway cofactor biosynthesis; riboflavin biosynthesis; 2-hydroxy-3-oxobutyl phosphate from D-ribulose 5-phosphate: step 1/1. In terms of biological role, catalyzes the conversion of D-ribulose 5-phosphate to formate and 3,4-dihydroxy-2-butanone 4-phosphate. The chain is 3,4-dihydroxy-2-butanone 4-phosphate synthase from Vibrio vulnificus (strain CMCP6).